We begin with the raw amino-acid sequence, 376 residues long: 5-amino-6-(D-ribitylamino)uracil--L-tyrosine 4-hydroxyphenyl transferase 1 (376 aa).

The Radical SAM core domain occupies 50 to 275; that stretch reads VTYVVNRNIN…PGLEDLKVYA (226 aa). 3 residues coordinate [4Fe-4S] cluster: Cys-64, Cys-68, and Cys-71.

It belongs to the radical SAM superfamily. CofH family. As to quaternary structure, consists of two subunits, CofG and CofH. It depends on [4Fe-4S] cluster as a cofactor.

The catalysed reaction is 5-amino-6-(D-ribitylamino)uracil + L-tyrosine + S-adenosyl-L-methionine = 5-amino-5-(4-hydroxybenzyl)-6-(D-ribitylimino)-5,6-dihydrouracil + 2-iminoacetate + 5'-deoxyadenosine + L-methionine + H(+). Its pathway is cofactor biosynthesis; coenzyme F0 biosynthesis. Its function is as follows. Catalyzes the radical-mediated synthesis of 5-amino-5-(4-hydroxybenzyl)-6-(D-ribitylimino)-5,6-dihydrouracil from 5-amino-6-(D-ribitylamino)uracil and L-tyrosine. The chain is 5-amino-6-(D-ribitylamino)uracil--L-tyrosine 4-hydroxyphenyl transferase 1 from Methanosarcina mazei (strain ATCC BAA-159 / DSM 3647 / Goe1 / Go1 / JCM 11833 / OCM 88) (Methanosarcina frisia).